The following is a 213-amino-acid chain: MAALLRAVRRFRGKAVWERPLHGLWCCSGQEDPKRWVGSSSPISKEKLPNAETEKFWMFYRFDAIRTFGFLSRLKLAQTALTVVALPPGYYLYSQGLLTLNTVCLMSGISGFALTMLCWMSYFLRRLVGILYLNESGTMLRVAHLNFWGWRQDTYCPMADVIPLTETKDRPQEMFVRIQRYSGKQTFYVTLRYGRILDRERFTQVFGVHQMLK.

Residues 1–79 lie on the Mitochondrial matrix side of the membrane; that stretch reads MAALLRAVRR…FLSRLKLAQT (79 aa). The chain crosses the membrane as a helical span at residues 80–100; that stretch reads ALTVVALPPGYYLYSQGLLTL. Topologically, residues 101 to 102 are mitochondrial intermembrane; the sequence is NT. A helical membrane pass occupies residues 103-123; sequence VCLMSGISGFALTMLCWMSYF. Over 124-213 the chain is Mitochondrial matrix; it reads LRRLVGILYL…QVFGVHQMLK (90 aa).

This sequence belongs to the TMEM186 family. In terms of assembly, part of the mitochondrial complex I assembly/MCIA complex that comprises at least the core subunits TMEM126B, NDUFAF1, ECSIT and ACAD9 and complement subunits such as COA1 and TMEM186. Interacts with MT-ND3.

It localises to the mitochondrion inner membrane. Its function is as follows. As part of the MCIA complex, required for efficient assembly of the mitochondrial complex I. This is Transmembrane protein 186 from Homo sapiens (Human).